The chain runs to 232 residues: Large ribosomal subunit protein uL1 (232 aa).

It belongs to the universal ribosomal protein uL1 family. As to quaternary structure, part of the 50S ribosomal subunit.

In terms of biological role, binds directly to 23S rRNA. The L1 stalk is quite mobile in the ribosome, and is involved in E site tRNA release. Protein L1 is also a translational repressor protein, it controls the translation of the L11 operon by binding to its mRNA. In Mesorhizobium japonicum (strain LMG 29417 / CECT 9101 / MAFF 303099) (Mesorhizobium loti (strain MAFF 303099)), this protein is Large ribosomal subunit protein uL1.